A 260-amino-acid chain; its full sequence is Putative ABC transporter substrate-binding lipoprotein YvgL (260 aa).

A signal peptide spans 1–20; that stretch reads MFKKYSIFIAALTAFLLVAG. C21 is lipidated: N-palmitoyl cysteine. Residue C21 is the site of S-diacylglycerol cysteine attachment. 5 residues coordinate molybdate: S43, S71, A151, V178, and Y196.

It belongs to the bacterial solute-binding protein ModA family.

It is found in the cell membrane. This is Putative ABC transporter substrate-binding lipoprotein YvgL (yvgL) from Bacillus subtilis (strain 168).